The chain runs to 172 residues: Stellate protein CG33237 (172 aa).

The protein belongs to the casein kinase 2 subunit beta family. As to quaternary structure, interacts in vitro with the casein kinase 2 alpha subunit (CkII-alpha). The relevance of such interaction is however unclear in vivo. Probably not expressed in wild-type flies. In males lacking the Y chromosome, it is testis-specific and constitutes the main component of star-shaped crystals.

Its function is as follows. Unknown. In males lacking the Y chromosome, its strong overexpression leads to the appearance of proteinaceous star-shaped crystals in the primary spermatocytes causing meiotic drive, possibly by interfering with normal casein kinase 2 activity. In Drosophila melanogaster (Fruit fly), this protein is Stellate protein CG33237 (Ste:CG33237).